A 246-amino-acid chain; its full sequence is MTTGDCCHLPGSLCDCSSSPAFSKVVEATGLGPPQYVAQVTSRDGRLLSTVIRALDTPSDCPFCRICHEGANGENLLSPCGCTGTLGAVHKSCLEKWLSSSNTSYCELCHTEFAVEKRPRPLTEWLKDPGPRTEKRTLCCDMVCFVFITPLAAISGWLCLRGAQDHLRLHSRLEAVGLIALTIALFTIYVLWTLVSFRYHCQLYSEWRKTNQKVRLKIREADGSEDPHHSLLATGLLKKVAEETPV.

Residues 56–116 (DTPSDCPFCR…ELCHTEFAVE (61 aa)) form an RING-CH-type zinc finger. Residues Cys64, Cys67, Cys80, Cys82, His90, Cys93, Cys106, and Cys109 each coordinate Zn(2+). The segment at 121–246 (PLTEWLKDPG…LKKVAEETPV (126 aa)) is required for interaction with IKBKG. 2 helical membrane passes run 138–158 (LCCD…SGWL) and 175–195 (AVGL…WTLV).

As to quaternary structure, interacts with STX6; the interaction promotes MARCHF2-mediated ubiquitination and degradation of CFTR. Interacts with MARCHF3. Interacts with GOPC/CAL; the interaction leads to CFTR ubiquitination and degradation. Interacts with CFTR; the interaction leads to CFTR ubiqtuitination and degradation. Interacts (via PDZ domain) with DLG1 (via PDZ domains); the interaction leads to DLG1 ubiqtuitination and degradation. Interacts with ERGIC3. Interacts with ADRB2. Interacts with IKBKG/NEMO; during the late stages of macrophage viral and bacterial infection; the interaction leads to ubiquitination and degradation of IKBKG/NEMO. Ubiquitously expressed. Present in liver (at protein level).

Its subcellular location is the endoplasmic reticulum membrane. It is found in the lysosome membrane. The protein localises to the endosome membrane. The protein resides in the golgi apparatus membrane. It localises to the cytoplasm. Its subcellular location is the cell membrane. The enzyme catalyses S-ubiquitinyl-[E2 ubiquitin-conjugating enzyme]-L-cysteine + [acceptor protein]-L-lysine = [E2 ubiquitin-conjugating enzyme]-L-cysteine + N(6)-ubiquitinyl-[acceptor protein]-L-lysine.. The protein operates within protein modification; protein ubiquitination. In terms of biological role, E3 ubiquitin-protein ligase that may mediate ubiquitination of TFRC and CD86, and promote their subsequent endocytosis and sorting to lysosomes via multivesicular bodies. E3 ubiquitin ligases accept ubiquitin from an E2 ubiquitin-conjugating enzyme in the form of a thioester and then directly transfer the ubiquitin to targeted substrates. Together with GOPC/CAL mediates the ubiquitination and lysosomal degradation of CFTR. Ubiquitinates and therefore mediates the degradation of DLG1. Regulates the intracellular trafficking and secretion of alpha1-antitrypsin/SERPINA1 and HP/haptoglobin via ubiquitination and degradation of the cargo receptor ERGIC3. Negatively regulates the antiviral and antibacterial immune response by repression of the NF-kB and type 1 IFN signaling pathways, via MARCHF2-mediated K48-linked polyubiquitination of IKBKG/NEMO, resulting in its proteasomal degradation. May be involved in endosomal trafficking through interaction with STX6. This is E3 ubiquitin-protein ligase MARCHF2 (Marchf2) from Rattus norvegicus (Rat).